Reading from the N-terminus, the 495-residue chain is uncharacterized protein (495 aa).

The signal sequence occupies residues 1–17 (MRTLSLLILFLSTFLFA).

This is an uncharacterized protein from Aquifex aeolicus (strain VF5).